The sequence spans 297 residues: ATP phosphoribosyltransferase (297 aa).

It belongs to the ATP phosphoribosyltransferase family.

It localises to the cytoplasm. The enzyme catalyses 1-(5-phospho-beta-D-ribosyl)-ATP + diphosphate = 5-phospho-alpha-D-ribose 1-diphosphate + ATP. It functions in the pathway amino-acid biosynthesis; L-histidine biosynthesis; L-histidine from 5-phospho-alpha-D-ribose 1-diphosphate: step 1/9. Its function is as follows. Catalyzes the condensation of ATP and 5-phosphoribose 1-diphosphate to form N'-(5'-phosphoribosyl)-ATP (PR-ATP). Has a crucial role in the pathway because the rate of histidine biosynthesis seems to be controlled primarily by regulation of the enzymatic activity. This chain is ATP phosphoribosyltransferase (HIS1), found in Kluyveromyces lactis (strain ATCC 8585 / CBS 2359 / DSM 70799 / NBRC 1267 / NRRL Y-1140 / WM37) (Yeast).